Consider the following 2465-residue polypeptide: MEPIAIVGSACRFPGDATSPSKLWELLKAPRDLSQEVKRFNAKGFYHENGHHHGASNVMAAYTLESDPMEFDPQFFNIQPGEAESMDPQHRLLLETTYEGLEQAGIPIESLRGSDTSAFIGVMSADYTTMVFFDSECTPTYSATGTSRAILSNRLSHAFDWRGASMTLDTACSSSLVAIHLAVRELRSGSSRVAVAGGTNLILSADPFISETNLDMLSPQGKCHMWDARANGYARGEGISVVVLKTLRDALADGDHIECIIRETGVNQDGHTPGITMPNPEAQTRLIRDVYSRAGLDLSKPEDRCQYFEAHGTGTKAGDKVESRAIHDAFFPETGGEQAPLEPLYVGSVKTIIGHTEGTAGVAGVLRASLAIQNGTIPPNLHFESLNPELKPYYGNLQIATEAIPWPELHGGVRRASVNSFGFGGANCHVILEGYLPSYGDDALREVVSKPSLSSSPSLSPTSTSPPTPRTPANSLPFLISASSEKTLRKLVQRYIDHVGQNPNVDMGNLAWTLFKNRSALNFRLAVPAPTPEALITTLESVLKQPAGGPKSSIIRTVSQPKRLLGVFTGQGAQWATMGRQLVQKSARAAATVDRLDAALAALPDPYRPTWSLKAQILAEKKASRIDESAVSQPLCTVIQIILVDLLRNAGVDFDGVLGHSSGEIAAAYAAGFLSAEDAVKIAYTRGLCAHLARGQQGEKGGMIAAGMTHPDAKDLCENEAVLGRISVAAYNSPTSVTLSGDSDVIDQVSVVLEDEDKFNRVLRVQTAYHSHHMEACVGLYRKALAACNITVLNPAQHVPWFSSVYGGSVMSATSNIASEYWIQNMVQPVLFSEAVAAASQTEHQDALPTLAEIGPHPALKSPVLETLKSLGIDKVAYCGTLSRAVDDVDALSAFFGWFWSVSAQSGLQLDRYAAQFSQNKLVSLRNLPSYPWDHTHSYEFESRESHAHRFRELPCHPLLGVRTNTCGDAEYRWKNFLSTEEIPWLTGHQIQGQTLVPAAMFLIMAAEAATIAAGSLGLQVRLIELHDSTIHRALALDDDKSTETLFYLSGVEVTSSPNEGSILSATYHCDAATSKSSSRLTSIASGKVQLFVGGDASRTLPNSALGSGQLNEIDVDTFYDNLRTIGYNYNGAFRSIASLQRTTNWANGTIAAPTSTDPATSPSWVPLHPAVLDVSFQAVFAALSYPGDGRLQTLHVPTTIKRLTISPAALSSGAIPAGGFAFNAVSYMLDRRTICGDIEVGIAGQEESIFKVEGLTVSPVAPVTADDDKHMFADMVLCVAEPSTALLPDVPEQLLANTLSQNYGEAENAVSNKHSSLENGHLTNGHCLANGGHSTNGLTNGHASTNGHGSTNGHISTNGHSTNGDVLTNGHSVNGHAHSNGHSENGAISVNKPTAGGYTADKARSYHIVAGLLKQITDRYPKARILERVTDNASEVLNVFTAIGGRLSSYALDGIAESEFDAIADSRDDGSSLKRVSLQLESPSFLETNAGGEYDVVVLRDGHATDKGTLQLLRHLLRPGGYLLLIHELDQSLASLEGDSELWSGRFTEAGFSKMEAQGSSKSGRFSIMATMATNDAVDALRQPMVSVGAKIPTLIIIGGETPVTVDLIGKIRALLAPFCQVVQTVKSLAHLDDSAVAEKAFVLSLTELDSDLYRDLSEKTFTKLQELTTRSDRLIWVVSGSQGRNPYANMIKGTLRCLIEECSHLVTQILDIEDNVSGAGQFISDAVLRLHNLHSMENASKTLWSHEPELHLRNGQPFISRYLPNKQLDLGYNSLQRHVQVELQPTAGVLQLSADKSALSLERLRVAALPSSHLAANELETEIIVRYSQSVAVHVPALGYLYPVTGTDVQTGRVVAALSTENRSRVSVHKATLVPLIGLSDDQERSLPERLQAFFLAATIMQRCPPFTSAVVHEASNSLTQLLVDAGRKSGVQFIFTTSDASRVDEIQEQGWKFIARHGSTRQLSKLVQPDTLMCVDCTQTGSGDSLAAMGLQVPSGVAVLTASDFVRPQSFKYRKIEDQAVHEALKAAVAETTSLAAEKSDLGADGMIQIQDLPQSFAFGVPAKTISWVNELPVRATVLPALEECHFNPDRTYFLVGMAGSLGLSTVSYMISRGARHFALSSRNPQVDAAWIAAQRTKYGAVVNTFALDITDKAALTKTIAAIRATMPPIGGVANGALIIEDSLFADLTYKQMTRALGPKVDGSRYLDEAFGQDDLEFFILYSSLVSIAGNTGQIAYAVANSFMVSLAHQRRQRGLAASVINLTGVSGIGFITRTGHNIIARSKALGYDIISESDYCYIFAESVLASPSTSPHGPEVSSSLRYVDVARDKVVPPWAYDAKFGHYLLDRQAPATNGAAGESDNGGHLSLDVLKAAPPAECYDMIFRAFQTVLQKLLRLPADQPVPAEVQILDLGVDSLVAVKMRQWFLKELQVNMPVMKLIGGATVSQVVWSVVHQILPESAK.

The Ketosynthase family 3 (KS3) domain maps to methionine 1–glycine 434. Active-site for beta-ketoacyl synthase activity residues include cysteine 172, histidine 311, and histidine 355. The interval lysine 450–leucine 476 is disordered. Residues proline 451–serine 463 show a composition bias toward low complexity. Residues valine 567–aspartate 888 are malonyl-CoA:ACP transacylase (MAT) domain. The tract at residues histidine 957–aspartate 1096 is N-terminal hotdog fold. The tract at residues histidine 957–threonine 1265 is dehydratase (DH) domain. The PKS/mFAS DH domain occupies histidine 957 to aspartate 1267. Histidine 989 acts as the Proton acceptor; for dehydratase activity in catalysis. Residues leucine 1111–aspartate 1267 are C-terminal hotdog fold. Residue aspartate 1174 is the Proton donor; for dehydratase activity of the active site. Residues histidine 1334–valine 1367 form a disordered region. The ketoreductase (KR)domain stretch occupies residues threonine 2095–valine 2269. Residues aspartate 2384 to isoleucine 2459 enclose the Carrier domain. At serine 2419 the chain carries O-(pantetheine 4'-phosphoryl)serine.

It depends on pantetheine 4'-phosphate as a cofactor.

The enzyme catalyses 10 malonyl-CoA + acetyl-CoA + 3 AH2 + 8 NADPH + 18 H(+) = cordypyrone A + 3 A + 10 CO2 + 8 NADP(+) + 11 CoA + 8 H2O. The protein operates within secondary metabolite biosynthesis. In terms of biological role, highly reducing polyketide synthase (HR-PKS); part of the gene cluster that mediates the biosynthesis of cordypyrones A and B, 2 pyrones that show modest activities against pathogenic bacteria including methicillin-resistant Staphylococcus aureus (MRSA), Mycobacterium tuberculosis and Bacillus cereus. The HR-PKS milA catalyzes the formation of cordypyrones A via condensation of one acetate with 10 malonate units. Since milA lacks an enoyl reductase domain, the 2 beta-keto processing domains DH and KR of milA collaborate with the trans-enoyl reductase milB to catalyze the different levels of reduction. The cytochrome P450 monooxygenase milC then hydroxylates the C-22 of cordypyrones A to yield cordypyrones B. This chain is Highly reducing polyketide synthase milA, found in Cordyceps militaris (strain CM01) (Caterpillar fungus).